Reading from the N-terminus, the 298-residue chain is Syntenin-1 (298 aa).

Serine 2 is subject to N-acetylserine. An interaction with PDCD6IP region spans residues 2–60; the sequence is SLYPSLEDLKVDKVIQAQTAFSANPANPAILSEASAPIPHDGNLYPRLYPELSQYMGLS. Short sequence motifs (LYPX(n)L motif) lie at residues 3-7, 45-49, and 49-53; these read LYPSL, LYPRL, and LYPEL. Serine 6 is modified (phosphoserine). The residue at position 46 (tyrosine 46) is a Phosphotyrosine. 2 consecutive PDZ domains span residues 114–193 and 198–273; these read EVIL…IRDR and TITM…MPAF. A 1,2-diacyl-sn-glycero-3-phospho-(1D-myo-inositol-4,5-bisphosphate) contacts are provided by residues asparagine 215 and 250 to 251; that span reads KD.

In terms of assembly, monomer and homodimer. Interacts with SDC1, SDC2, SDC3, SDC4, NRXN2, EPHA7, EPHB1, NF2 isoform 1, TGFA and IL5RA. Interacts with NFASC and PTPRJ. Interacts with SDCBP2. Interacts with PDCD6IP. Forms a complex with PDCD6IP and SDC2. Interacts (via C-terminus) with TGFBR1. Binds to FZD7; this interaction is increased by inositol trisphosphate (IP3). Interacts with SMO. In terms of processing, phosphorylated on tyrosine residues. In terms of tissue distribution, expressed in lung cancers, including adenocarcinoma, squamous cell carcinoma and small-cell carcinoma (at protein level). Widely expressed. Expressed in fetal kidney, liver, lung and brain. In adult highest expression in heart and placenta.

The protein localises to the cell junction. It localises to the focal adhesion. Its subcellular location is the adherens junction. The protein resides in the cell membrane. It is found in the endoplasmic reticulum membrane. The protein localises to the nucleus. It localises to the melanosome. Its subcellular location is the cytoplasm. The protein resides in the cytosol. It is found in the cytoskeleton. The protein localises to the secreted. It localises to the extracellular exosome. Its subcellular location is the membrane raft. In terms of biological role, multifunctional adapter protein involved in diverse array of functions including trafficking of transmembrane proteins, neuro and immunomodulation, exosome biogenesis, and tumorigenesis. Positively regulates TGFB1-mediated SMAD2/3 activation and TGFB1-induced epithelial-to-mesenchymal transition (EMT) and cell migration in various cell types. May increase TGFB1 signaling by enhancing cell-surface expression of TGFR1 by preventing the interaction between TGFR1 and CAV1 and subsequent CAV1-dependent internalization and degradation of TGFR1. In concert with SDC1/4 and PDCD6IP, regulates exosome biogenesis. Regulates migration, growth, proliferation, and cell cycle progression in a variety of cancer types. In adherens junctions may function to couple syndecans to cytoskeletal proteins or signaling components. Seems to couple transcription factor SOX4 to the IL-5 receptor (IL5RA). May also play a role in vesicular trafficking. Seems to be required for the targeting of TGFA to the cell surface in the early secretory pathway. This is Syntenin-1 (SDCBP) from Homo sapiens (Human).